Reading from the N-terminus, the 1031-residue chain is MMS19 nucleotide excision repair protein homolog (1031 aa).

The residue at position 2 (alanine 2) is an N-acetylalanine. HEAT repeat units follow at residues 867–905 (QRFFTDNVPALVQGFHAAPQDVKPNYLKGLSHVLNRLPK), 909–947 (LPELPTLLSLLLEALSCPDSVVQLSTLSCLQPLLLEAPQ), 950–988 (SLHVDTLVTKFLNLSSSYSMAVRIAALQCMHALTRLPTS), and 991–1029 (LPYKSQVIRALAKPLDDKKRLVRKEAVSARGEWFLLGSP). Serine 1028 bears the Phosphoserine mark.

It belongs to the MET18/MMS19 family. As to quaternary structure, component of the CIA complex. In the CIA complex, interacts directly with CIAO2B and CIAO3. Component of the MMXD complex, composed of CIAO1, ERCC2, CIAO2B, MMS19 and SLC25A5. Interacts with CIAO2B; the interaction is direct. Interacts with ERCC2/XPD; the interaction is direct. Interacts with ERCC3/XPB and NCOA3/RAC3. Interacts with RTEL1; the interaction mediates the association of RTEL1 with the CIA complex. Interacts with BRIP1. Interacts with KIF4A; the interaction facilitates the transfer of Fe-S clusters to KIF4A to ensure proper localization of KIF4A to the mitotic machinery components. Interacts with CCDC117; the interaction is indirect. Post-translationally, ubiquitinated; undergoes 'Lys-48'-linked polyubiquitination. Ubiquitously expressed with higher expression in testis.

It localises to the nucleus. Its subcellular location is the cytoplasm. The protein localises to the cytoskeleton. It is found in the spindle. In terms of biological role, key component of the cytosolic iron-sulfur protein assembly (CIA) complex, a multiprotein complex that mediates the incorporation of iron-sulfur cluster into apoproteins specifically involved in DNA metabolism and genomic integrity. In the CIA complex, MMS19 acts as an adapter between early-acting CIA components and a subset of cellular target Fe/S proteins such as ERCC2/XPD, FANCJ and RTEL1, thereby playing a key role in nucleotide excision repair (NER), homologous recombination-mediated double-strand break DNA repair, DNA replication and RNA polymerase II (POL II) transcription. As a CIA complex component and in collaboration with CIAO1 and CIAO2, binds to and facilitates the assembly of most cytosolic-nuclear Fe/S proteins. As part of the mitotic spindle-associated MMXD complex, plays a role in chromosome segregation, probably by facilitating iron-sulfur cluster assembly into ERCC2/XPD. Together with CIAO2, facilitates the transfer of Fe-S clusters to the motor protein KIF4A, which ensures proper localization of KIF4A to mitotic machinery components to promote the progression of mitosis. Indirectly acts as a transcriptional coactivator of estrogen receptor (ER), via its role in iron-sulfur insertion into some component of the TFIIH-machinery. The protein is MMS19 nucleotide excision repair protein homolog of Mus musculus (Mouse).